The sequence spans 83 residues: MVTIRLARGGAKKRPFYNIVVADSRNARDGRFIERVGFFNPVARGQEEALRLDLDRVEHWVANGAATTDRVAKLIKDARKAAA.

Belongs to the bacterial ribosomal protein bS16 family.

The protein is Small ribosomal subunit protein bS16 of Shewanella halifaxensis (strain HAW-EB4).